Reading from the N-terminus, the 253-residue chain is Triosephosphate isomerase (253 aa).

12-14 is a substrate binding site; the sequence is NWK. The Electrophile role is filled by His100. The active-site Proton acceptor is Glu170. Substrate contacts are provided by residues Gly176, Ser215, and 236–237; that span reads GG.

It belongs to the triosephosphate isomerase family. Homodimer.

It is found in the cytoplasm. It carries out the reaction D-glyceraldehyde 3-phosphate = dihydroxyacetone phosphate. Its pathway is carbohydrate biosynthesis; gluconeogenesis. It participates in carbohydrate degradation; glycolysis; D-glyceraldehyde 3-phosphate from glycerone phosphate: step 1/1. In terms of biological role, involved in the gluconeogenesis. Catalyzes stereospecifically the conversion of dihydroxyacetone phosphate (DHAP) to D-glyceraldehyde-3-phosphate (G3P). In Rhodopseudomonas palustris (strain BisA53), this protein is Triosephosphate isomerase.